The primary structure comprises 388 residues: 1-deoxy-D-xylulose 5-phosphate reductoisomerase (388 aa).

Residues Thr15, Gly16, Ser17, Ile18, and Asn127 each contribute to the NADPH site. Lys128 is a binding site for 1-deoxy-D-xylulose 5-phosphate. Glu129 contacts NADPH. Asp153 lines the Mn(2+) pocket. 1-deoxy-D-xylulose 5-phosphate-binding residues include Ser154, Glu155, Ser179, and His202. Glu155 provides a ligand contact to Mn(2+). Residue Gly208 coordinates NADPH. Ser215, Asn220, Lys221, and Glu224 together coordinate 1-deoxy-D-xylulose 5-phosphate. Glu224 contacts Mn(2+).

Belongs to the DXR family. It depends on Mg(2+) as a cofactor. Mn(2+) is required as a cofactor.

The catalysed reaction is 2-C-methyl-D-erythritol 4-phosphate + NADP(+) = 1-deoxy-D-xylulose 5-phosphate + NADPH + H(+). It participates in isoprenoid biosynthesis; isopentenyl diphosphate biosynthesis via DXP pathway; isopentenyl diphosphate from 1-deoxy-D-xylulose 5-phosphate: step 1/6. In terms of biological role, catalyzes the NADPH-dependent rearrangement and reduction of 1-deoxy-D-xylulose-5-phosphate (DXP) to 2-C-methyl-D-erythritol 4-phosphate (MEP). The chain is 1-deoxy-D-xylulose 5-phosphate reductoisomerase from Bacteroides fragilis (strain YCH46).